Here is a 308-residue protein sequence, read N- to C-terminus: D-alanine--D-alanine ligase (308 aa).

Positions 104 to 304 constitute an ATP-grasp domain; it reads KQALVPHGIP…YAELVERIVE (201 aa). An ATP-binding site is contributed by 131–187; that stretch reads LPRPYVLKPVNEGSSVGVAIVRDDSNYGNPISRDALGPWQQFDRLLAEPFIKGRELT. 3 residues coordinate Mg(2+): Asp255, Glu271, and Asn273.

It belongs to the D-alanine--D-alanine ligase family. Mg(2+) serves as cofactor. Mn(2+) is required as a cofactor.

The protein resides in the cytoplasm. The enzyme catalyses 2 D-alanine + ATP = D-alanyl-D-alanine + ADP + phosphate + H(+). Its pathway is cell wall biogenesis; peptidoglycan biosynthesis. Functionally, cell wall formation. This Sphingopyxis alaskensis (strain DSM 13593 / LMG 18877 / RB2256) (Sphingomonas alaskensis) protein is D-alanine--D-alanine ligase.